Reading from the N-terminus, the 298-residue chain is MITVRVPATSANMGPGFDTLGIALNLYNDFGFREIEDGLKFNGMPEEFCNEDNIIYKAMKYCFDKAGYKIKGLEISEIKQDVPVSRGLGSSSTCIVGGLVGANEILGKKFSEEELLEMAVEIEGHPDNVAPALLGGMVVAIFDENKTYYDKIDVKNGIKFISIIPNFRLSTEEARKVLPKEISLKDGVYNVSRAALMVACFSSGKYELLRYACKDAFHQNYRSKLIPGFEEVYNKSYELGALACYLSGAGPTIMAIIDEKDERFSNKLKEFLQIKGLEWNILGLSLDNAGATIIEGTK.

83 to 93 (PVSRGLGSSST) contacts ATP.

It belongs to the GHMP kinase family. Homoserine kinase subfamily.

The protein resides in the cytoplasm. It catalyses the reaction L-homoserine + ATP = O-phospho-L-homoserine + ADP + H(+). It functions in the pathway amino-acid biosynthesis; L-threonine biosynthesis; L-threonine from L-aspartate: step 4/5. Functionally, catalyzes the ATP-dependent phosphorylation of L-homoserine to L-homoserine phosphate. The sequence is that of Homoserine kinase from Clostridium beijerinckii (strain ATCC 51743 / NCIMB 8052) (Clostridium acetobutylicum).